The following is a 1365-amino-acid chain: MEFSIRKSPLSVQKVVKCMKMKQTPEILGSANGKTQNCEVNHECSVFLSKAQLSNSLQEGVMQKFNGHDALPFLPAEKLKDLTSCVFNGEPGAHDTKLCFEAQEVKGIGTPPNTTPIKNGSPEIKLKITKTYMNGKPLFESSICGDGAADVSQSEENEQKSDNKTRRNRKRSIKYDSLLEQGLVEAALVSKISSPADKKIPVKKESCPNTGRDRDLLLKYNVGDLVWSKVSGYPWWPCMVSADPLLHNHTKLKGQKKSARQYHVQFFGDAPERAWIFEKSLVAFEGEEQFEKLCQESAKQAPTKAEKIKLLKPISGRLRAQWEMGIVQAEEAASMSIEERKAKFTFLYVGDQLHLNPQVAKEAGIVTEPLGEMVDSSGASEEAAVDPGSVREEDIPTKRRRRTKRSSSAENQEGDPGTDKSTPPKMAEAEPKRGVGSPAGRKKSTGSAPRSRKGDSAAQFLVFCQKHRDEVVAEHPDASGEEIEELLGSQWSMLNEKQKARYNTKFSLMISAQSEEDSGNGNGKKRSHTKRADDPAEDVDVEDAPRKRLRADKHSLRKRETITDKTARTSSYKAIEAASSLKSQAATKNLSDACKPLKKRNRASATASSALGFNKSSSPSASLTEHEVSDSPGDEPSESPYESADETQTEASVSSKKSERGMAAKKEYVCQLCEKTGSLLLCEGPCCGAFHLACLGLSRRPEGRFTCTECASGIHSCFVCKESKMEVKRCVVNQCGKFYHEACVKKYPLTVFESRGFRCPLHSCMSCHASNPSNPRPSKGKMMRCVRCPVAYHGGDACLAAGCSVIASNSIICTGHFTARKGKRHHTHVNVSWCFVCSKGGSLLCCEACPAAFHPDCLNIEMPDGSWFCNDCRAGKKLHFQDIIWVKLGNYRWWPAEVCHPKNVPPNIQKMKHEIGEFPVFFFGSKDYYWTHQARVFPYMEGDRGSRYQGVRGIGRVFKNALQEAEARFNEVKLQREARETQESERKPPPYKHIKVNKPYGKVQIYTADISEIPKCNCKPTDENPCGSDSECLNRMLMFECHPQVCPAGEYCQNQCFTKRQYPETKIIKTDGKGWGLVAKRDIRKGEFVNEYVGELIDEEECMARIKYAHENDITHFYMLTIDKDRIIDAGPKGNYSRFMNHSCQPNCETLKWTVNGDTRVGLFAVCDIPAGTELTFNYNLDCLGNEKTVCRCGASNCSGFLGDRPKTSASLSSEEKGKKAKKKTRRRRAKGEGKRQSEDECFRCGDGGQLVLCDRKFCTKAYHLSCLGLGKRPFGKWECPWHHCDVCGKPSTSFCHLCPNSFCKEHQDGTAFRSTQDGQSYCCEHDLRADSSSSTKTEKPFPESLKSKGKRKKRRCWRRVTDGK.

Phosphothreonine is present on residues Thr-110 and Thr-114. Position 121 is a phosphoserine (Ser-121). Residues 149 to 169 are disordered; it reads ADVSQSEENEQKSDNKTRRNR. The residue at position 172 (Ser-172) is a Phosphoserine. The PWWP 1 domain maps to 222–286; sequence VGDLVWSKVS…FEKSLVAFEG (65 aa). 3 disordered regions span residues 373–455, 513–567, and 594–658; these read MVDS…RKGD, QSEE…DKTA, and CKPL…SKKS. Ser-376 carries the phosphoserine modification. Thr-422 is modified (phosphothreonine). Residues 453 to 521 constitute a DNA-binding region (HMG box); the sequence is KGDSAAQFLV…AQSEEDSGNG (69 aa). The span at 552 to 567 shows a compositional bias: basic and acidic residues; it reads DKHSLRKRETITDKTA. A compositionally biased stretch (polar residues) spans 603–623; sequence ASATASSALGFNKSSSPSASL. Acidic residues predominate over residues 632-648; the sequence is PGDEPSESPYESADETQ. 3 PHD-type zinc fingers span residues 667–713, 714–770, and 831–875; these read EYVC…CASG, IHSC…CHAS, and VSWC…CRAG. Residues 880–942 form the PWWP 2 domain; the sequence is FQDIIWVKLG…QARVFPYMEG (63 aa). The AWS domain maps to 1011 to 1061; it reads SEIPKCNCKPTDENPCGSDSECLNRMLMFECHPQVCPAGEYCQNQCFTKRQ. Zn(2+) is bound by residues Cys-1016, Cys-1018, Cys-1026, Cys-1032, Cys-1041, Cys-1046, and Cys-1052. Residues 1063–1180 form the SET domain; that stretch reads PETKIIKTDG…AGTELTFNYN (118 aa). S-adenosyl-L-methionine contacts are provided by residues Trp-1075, 1115-1118, and 1141-1142; these read THFY and NH. Cys-1144 provides a ligand contact to Zn(2+). Asn-1186 contributes to the S-adenosyl-L-methionine binding site. The region spanning 1187 to 1203 is the Post-SET domain; the sequence is EKTVCRCGASNCSGFLG. Cys-1191 serves as a coordination point for Zn(2+). Residue Arg-1192 participates in S-adenosyl-L-methionine binding. Residues Cys-1193 and Cys-1198 each coordinate Zn(2+). The tract at residues 1206 to 1232 is disordered; sequence PKTSASLSSEEKGKKAKKKTRRRRAKG. Residues 1219-1230 show a composition bias toward basic residues; sequence KKAKKKTRRRRA. A PHD-type 4; atypical zinc finger spans residues 1239–1286; it reads EDECFRCGDGGQLVLCDRKFCTKAYHLSCLGLGKRPFGKWECPWHHCD. The tract at residues 1329–1365 is disordered; the sequence is RADSSSSTKTEKPFPESLKSKGKRKKRRCWRRVTDGK. Residues 1348-1359 show a composition bias toward basic residues; it reads SKGKRKKRRCWR.

This sequence belongs to the class V-like SAM-binding methyltransferase superfamily. Histone-lysine methyltransferase family. SET2 subfamily. In terms of assembly, interacts with HDAC1. Interacts (via PHD-type zinc fingers 1, 2 and 3) with SALL1. Interacts (via PHD-type 1, 2 and 3) with SALL4. Interacts with NANOG. Interacts with OGT. Interacts (via HMG box) with NKX2-5. In terms of tissue distribution, during B-cell development, expressed in early B2 cell progenitors (pre- and pro-B cells) with a decrease in expression at later stages.

It is found in the nucleus. It localises to the chromosome. The catalysed reaction is L-lysyl(36)-[histone H3] + S-adenosyl-L-methionine = N(6)-methyl-L-lysyl(36)-[histone H3] + S-adenosyl-L-homocysteine + H(+). It carries out the reaction L-lysyl(36)-[histone H3] + 2 S-adenosyl-L-methionine = N(6),N(6)-dimethyl-L-lysyl(36)-[histone H3] + 2 S-adenosyl-L-homocysteine + 2 H(+). Its function is as follows. Histone methyltransferase which specifically dimethylates nucleosomal histone H3 at 'Lys-36' (H3K36me2). Also monomethylates nucleosomal histone H3 at 'Lys-36' (H3K36me) in vitro. Does not trimethylate nucleosomal histone H3 at 'Lys-36' (H3K36me3). However, specifically trimethylates histone H3 at 'Lys-36' (H3K36me3) at euchromatic regions in embryonic stem (ES) cells. By methylating histone H3 at 'Lys-36', involved in the regulation of gene transcription during various biological processes. In ES cells, associates with developmental transcription factors such as SALL1 and represses inappropriate gene transcription mediated by histone deacetylation. During heart development, associates with transcription factor NKX2-5 to repress transcription of NKX2-5 target genes. Plays an essential role in adipogenesis, by regulating expression of genes involved in pre-adipocyte differentiation. During T-cell receptor (TCR) and CD28-mediated T-cell activation, promotes the transcription of transcription factor BCL6 which is required for follicular helper T (Tfh) cell differentiation. During B-cell development, required for the generation of the B1 lineage. During B2 cell activation, may contribute to the control of isotype class switch recombination (CRS), splenic germinal center formation, and the humoral immune response. Plays a role in class switch recombination of the immunoglobulin heavy chain (IgH) locus during B-cell activation. By regulating the methylation of histone H3 at 'Lys-36' and histone H4 at 'Lys-20' at the IgH locus, involved in TP53BP1 recruitment to the IgH switch region and promotes the transcription of IgA. Functionally, histone methyltransferase which specifically dimethylates nucleosomal histone H3 at 'Lys-36' (H3K36me2). Mono-, di- and tri-methylates histone H3 at 'Lys-27' (H3K27me, H3K27me2, H3K27me3). Methylation of histone H3 at 'Lys-27' is controversial. May act as a transcription regulator that binds DNA and suppresses IL5 transcription through HDAC recruitment. The sequence is that of Histone-lysine N-methyltransferase NSD2 (Nsd2) from Mus musculus (Mouse).